A 280-amino-acid chain; its full sequence is MSSSLQELCRKKLPDCILPEFFDDYVLQLLGLHWQDHGSLQRIEKNQILVQQEPIHINEALKVAASEGNYEIVELLLSWEADPRYAVVGALESKYYDLVHKYYGQVKDCHDILPLIQNPETFEKCHELNSTCSLKCLFKHAVMNDMLPILEKYTDYLDRWEYCSQMLFELACRKKKYEMVVWIEGVLGVGKVTSLFTIAISNRDLQLYSLGFSIILEKLYSCGQDPTFLLNHFLRDVSIKGLLPFVLKTIEYGGSKEIAITLAKKYQHKHILKYFETWES.

This sequence belongs to the asfivirus MGF 505 family.

Functionally, plays a role in virus cell tropism, and may be required for efficient virus replication in macrophages. The sequence is that of Protein MGF 505-3R from African swine fever virus (isolate Warthog/Namibia/Wart80/1980) (ASFV).